Here is a 261-residue protein sequence, read N- to C-terminus: 3-hydroxyacyl-CoA dehydrogenase type-2 (261 aa).

Ala-2 is modified (N-acetylalanine). The NAD(+) site is built by Ser-20, Leu-22, and Asp-41. Position 53 is an N6-acetyllysine; alternate (Lys-53). An N6-succinyllysine; alternate modification is found at Lys-53. Val-65 is an NAD(+) binding site. An N6-acetyllysine modification is found at Lys-69. Cys-91 contributes to the NAD(+) binding site. N6-acetyllysine is present on residues Lys-99 and Lys-105. Ser-155 contacts substrate. 4 residues coordinate NAD(+): Tyr-168, Lys-172, Phe-201, and Thr-203. Tyr-168 serves as the catalytic Proton acceptor. Residue Lys-212 is modified to N6-acetyllysine; alternate. N6-succinyllysine; alternate is present on Lys-212.

It belongs to the short-chain dehydrogenases/reductases (SDR) family. In terms of assembly, homotetramer. Component of mitochondrial ribonuclease P, a complex composed of TRMT10C/MRPP1, HSD17B10/MRPP2 and PRORP/MRPP3. Interacts with TRMT10C/MRPP1; forming the MRPP1-MRPP2 subcomplex of the mitochondrial ribonuclease P complex.

The protein localises to the mitochondrion. It localises to the mitochondrion matrix. It is found in the mitochondrion nucleoid. It carries out the reaction a (3S)-3-hydroxyacyl-CoA + NAD(+) = a 3-oxoacyl-CoA + NADH + H(+). The enzyme catalyses (2S,3S)-3-hydroxy-2-methylbutanoyl-CoA + NAD(+) = 2-methyl-3-oxobutanoyl-CoA + NADH + H(+). The catalysed reaction is testosterone + NAD(+) = androst-4-ene-3,17-dione + NADH + H(+). It catalyses the reaction 5alpha-androstane-3alpha,17beta-diol + NAD(+) = 17beta-hydroxy-5alpha-androstan-3-one + NADH + H(+). It carries out the reaction 17beta-estradiol + NAD(+) = estrone + NADH + H(+). The enzyme catalyses cholate + NAD(+) = 3alpha,12alpha-dihydroxy-7-oxo-5beta-cholanate + NADH + H(+). The catalysed reaction is (3S)-3-hydroxybutanoyl-CoA + NAD(+) = acetoacetyl-CoA + NADH + H(+). It catalyses the reaction (3S)-hydroxyoctanoyl-CoA + NAD(+) = 3-oxooctanoyl-CoA + NADH + H(+). It carries out the reaction (3S)-hydroxyhexadecanoyl-CoA + NAD(+) = 3-oxohexadecanoyl-CoA + NADH + H(+). The enzyme catalyses 17beta-hydroxy-5alpha-androstan-3-one + NAD(+) = 5alpha-androstan-3,17-dione + NADH + H(+). The catalysed reaction is 5alpha-pregnan-20beta-ol-3-one + NAD(+) = 5alpha-pregnane-3,20-dione + NADH + H(+). It catalyses the reaction 3alpha-hydroxy-5alpha-pregnan-20-one + NAD(+) = 5alpha-pregnane-3,20-dione + NADH + H(+). It carries out the reaction cortisone + NAD(+) = 17alpha-hydroxypregn-4-en-3,11,20-trione-21-al + NADH + H(+). The enzyme catalyses 11-dehydrocorticosterone + NAD(+) = pregn-4-ene-3,11,20,21-tetraone + NADH + H(+). The catalysed reaction is cortisol + NAD(+) = 11beta,17alpha-dihydroxypregn-4-ene-3,20,21-trione + NADH + H(+). It catalyses the reaction chenodeoxycholate + NAD(+) = 7-oxolithocholate + NADH + H(+). It carries out the reaction ursodeoxycholate + NAD(+) = 7-oxolithocholate + NADH + H(+). The enzyme catalyses 3beta,7beta-dihydroxy-5beta-cholan-24-oate + NAD(+) = 3beta-hydroxy-7-oxo-5beta-cholan-24-oate + NADH + H(+). It participates in amino-acid degradation; L-isoleucine degradation. The protein operates within lipid metabolism; fatty acid beta-oxidation. It functions in the pathway steroid metabolism. Its pathway is lipid metabolism; bile acid biosynthesis. Mitochondrial dehydrogenase involved in pathways of fatty acid, branched-chain amino acid and steroid metabolism. Acts as (S)-3-hydroxyacyl-CoA dehydrogenase in mitochondrial fatty acid beta-oxidation, a major degradation pathway of fatty acids. Catalyzes the third step in the beta-oxidation cycle, namely the reversible conversion of (S)-3-hydroxyacyl-CoA to 3-ketoacyl-CoA. Preferentially accepts straight medium- and short-chain acyl-CoA substrates with highest efficiency for (3S)-hydroxybutanoyl-CoA. Acts as 3-hydroxy-2-methylbutyryl-CoA dehydrogenase in branched-chain amino acid catabolic pathway. Catalyzes the oxidation of 3-hydroxy-2-methylbutanoyl-CoA into 2-methyl-3-oxobutanoyl-CoA, a step in isoleucine degradation pathway. Has hydroxysteroid dehydrogenase activity toward steroid hormones and bile acids. Catalyzes the oxidation of 3alpha-, 17beta-, 20beta- and 21-hydroxysteroids and 7alpha- and 7beta-hydroxy bile acids. Oxidizes allopregnanolone/brexanolone at the 3alpha-hydroxyl group, which is known to be critical for the activation of gamma-aminobutyric acid receptors (GABAARs) chloride channel. Has phospholipase C-like activity toward cardiolipin and its oxidized species. Likely oxidizes the 2'-hydroxyl in the head group of cardiolipin to form a ketone intermediate that undergoes nucleophilic attack by water and fragments into diacylglycerol, dihydroxyacetone and orthophosphate. Has higher affinity for cardiolipin with oxidized fatty acids and may degrade these species during the oxidative stress response to protect cells from apoptosis. By interacting with intracellular amyloid-beta, it may contribute to the neuronal dysfunction associated with Alzheimer disease (AD). Essential for structural and functional integrity of mitochondria. Functionally, in addition to mitochondrial dehydrogenase activity, moonlights as a component of mitochondrial ribonuclease P, a complex that cleaves tRNA molecules in their 5'-ends. Together with TRMT10C/MRPP1, forms a subcomplex of the mitochondrial ribonuclease P, named MRPP1-MRPP2 subcomplex, which displays functions that are independent of the ribonuclease P activity. The MRPP1-MRPP2 subcomplex catalyzes the formation of N(1)-methylguanine and N(1)-methyladenine at position 9 (m1G9 and m1A9, respectively) in tRNAs; HSD17B10/MRPP2 acting as a non-catalytic subunit. The MRPP1-MRPP2 subcomplex also acts as a tRNA maturation platform: following 5'-end cleavage by the mitochondrial ribonuclease P complex, the MRPP1-MRPP2 subcomplex enhances the efficiency of 3'-processing catalyzed by ELAC2, retains the tRNA product after ELAC2 processing and presents the nascent tRNA to the mitochondrial CCA tRNA nucleotidyltransferase TRNT1 enzyme. Associates with mitochondrial DNA complexes at the nucleoids to initiate RNA processing and ribosome assembly. This is 3-hydroxyacyl-CoA dehydrogenase type-2 (Hsd17b10) from Rattus norvegicus (Rat).